A 65-amino-acid chain; its full sequence is Large ribosomal subunit protein bL31 (65 aa).

Cysteine 16, cysteine 18, cysteine 36, and cysteine 39 together coordinate Zn(2+).

This sequence belongs to the bacterial ribosomal protein bL31 family. Type A subfamily. Part of the 50S ribosomal subunit. Requires Zn(2+) as cofactor.

Its function is as follows. Binds the 23S rRNA. The polypeptide is Large ribosomal subunit protein bL31 (Brevibacillus brevis (strain 47 / JCM 6285 / NBRC 100599)).